Consider the following 346-residue polypeptide: FMRFamide-related peptides type HF-1 (346 aa).

An N-terminal signal peptide occupies residues 1–19 (MTSLCLTIAPAVLSLICLS). A propeptide spanning residues 20 to 45 (SYGWAEDNNGIHTLDDGDNDPFFRHN) is cleaved from the precursor. Phe51 bears the Phenylalanine amide mark. The propeptide occupies 54–94 (AFVPLWDNADDSLVRKNLLTHWSEFPLSPALSSSDVFSRNS). Phe100 carries the phenylalanine amide modification. A propeptide spanning residues 103-109 (SYPPYQD) is cleaved from the precursor. Phe115 bears the Phenylalanine amide mark. A propeptide spanning residues 118–203 (SHQPDIDEYL…EILSNEDDLE (86 aa)) is cleaved from the precursor. The interval 137–185 (YRKRRSEDGDSKEDGLNRVARSADANQQSKNTQSNKFGKDLQKRETKKE) is disordered. Positions 141-152 (RSEDGDSKEDGL) are enriched in basic and acidic residues. The segment covering 160–172 (DANQQSKNTQSNK) has biased composition (polar residues). Basic and acidic residues predominate over residues 173-185 (FGKDLQKRETKKE). Residues Phe209 and Phe216 each carry the phenylalanine amide modification. Positions 219 to 226 (GDEDESYD) are excised as a propeptide. Phe232 is modified (phenylalanine amide). Residues 235 to 243 (SLRHDQEFE) constitute a propeptide that is removed on maturation. 2 positions are modified to phenylalanine amide: Phe249 and Phe256. Positions 259-267 (GDEDDAREE) are excised as a propeptide. Residue Phe273 is modified to Phenylalanine amide. Positions 276–283 (SSNEDEDI) are excised as a propeptide. Phe290 is modified (phenylalanine amide). The propeptide occupies 293 to 301 (SGNEDGDVD). 2 positions are modified to phenylalanine amide: Phe307 and Phe314. The propeptide occupies 317-325 (SEKEDGDVD). Phenylalanine amide occurs at positions 331 and 338. Residues 341–346 (GDSETS) constitute a propeptide that is removed on maturation.

It belongs to the FARP (FMRFamide related peptide) family. As to expression, central nervous system.

Its subcellular location is the secreted. In terms of biological role, can function as both cardioregulatory hormones and transmitters and may regulate cardiovascular function. The sequence is that of FMRFamide-related peptides type HF-1 from Cornu aspersum (Brown garden snail).